The chain runs to 465 residues: Hepatocyte nuclear factor 6 (465 aa).

Disordered stretches follow at residues 17 to 55 (SHEPVPAPADLLGGSPHARSSVAHRGSHLPPAHPRSMGM), 120 to 141 (DKFPHHHHHHHHHHHPHHHQRL), 264 to 290 (LLGTAREPNPSVTGAQVSNGSNSGQME), and 442 to 465 (DKWQDEGSSNSGNSSSSSSTCTKA). Positions 123–140 (PHHHHHHHHHHHPHHHQR) are enriched in basic residues. The span at 273-288 (PSVTGAQVSNGSNSGQ) shows a compositional bias: polar residues. Residues 283-369 (GSNSGQMEEI…QRMSALRLAA (87 aa)) constitute a DNA-binding region (CUT). Positions 385–444 (PKKPRLVFTDVQRRTLHAIFKENKRPSKELQITISQQLGLELSTVSNFFMNARRRSLDKW) form a DNA-binding region, homeobox. Positions 448-465 (GSSNSGNSSSSSSTCTKA) are enriched in low complexity.

This sequence belongs to the CUT homeobox family. In terms of assembly, binds DNA as a monomer. In terms of tissue distribution, highly expressed in liver; lower expression in testis and skin.

Its subcellular location is the nucleus. Transcriptional activator. Binds the consensus sequence 5'-DHWATTGAYTWWD-3' on a variety of gene promoters such as those of HNF3B and TTR. Important for liver genes transcription. This chain is Hepatocyte nuclear factor 6 (ONECUT1), found in Homo sapiens (Human).